A 353-amino-acid polypeptide reads, in one-letter code: Neutral protease 2 homolog AO090001000135 (353 aa).

Residues 1 to 19 (MRFISVSSLLLALAPALNA) form the signal peptide. Positions 20–176 (VPVEVAGSAQ…TQAVKILERR (157 aa)) are excised as a propeptide. 2 disulfides stabilise this stretch: cysteine 182/cysteine 254 and cysteine 261/cysteine 279. Histidine 304 is a Zn(2+) binding site. Glutamate 305 is an active-site residue. Positions 308 and 319 each coordinate Zn(2+).

The protein belongs to the peptidase M35 family. It depends on Zn(2+) as a cofactor.

The protein localises to the secreted. It catalyses the reaction Preferential cleavage of bonds with hydrophobic residues in P1'. Also 3-Asn-|-Gln-4 and 8-Gly-|-Ser-9 bonds in insulin B chain.. Secreted metalloproteinase that allows assimilation of proteinaceous substrates. Shows high activities on basic nuclear substrates such as histone and protamine. The sequence is that of Neutral protease 2 homolog AO090001000135 from Aspergillus oryzae (strain ATCC 42149 / RIB 40) (Yellow koji mold).